A 512-amino-acid chain; its full sequence is Paraspeckle component 1 (512 aa).

Composition is skewed to polar residues over residues 1-29 and 46-55; these read MANPNLKQVNIQNNATFPHQQNVTRSTES and DPSSANSEPQ. The disordered stretch occupies residues 1-56; it reads MANPNLKQVNIQNNATFPHQQNVTRSTESPGDPKETMEAVAPSPQDPSSANSEPQE. RRM domains lie at 76-148 and 150-231; these read CRLF…FATH and AALT…PTEQ. The stretch at 276 to 366 forms a coiled coil; the sequence is LDEMDKQQRE…MIRHREQLDI (91 aa). The tract at residues 451–512 is disordered; it reads GPLQMGSPVG…DGPNNKRRRY (62 aa). Residues 464–474 show a composition bias toward polar residues; the sequence is GVDSPQPQQHS. Gly residues predominate over residues 488–502; that stretch reads GQSGFGRGSPVGGSF.

Belongs to the PSPC family.

It is found in the nucleus speckle. In terms of biological role, RNA-binding protein required for the formation of nuclear paraspeckles. Binds to poly(A), poly(G) and poly(U) RNA homopolymers. This is Paraspeckle component 1 (pspc1) from Danio rerio (Zebrafish).